The following is a 310-amino-acid chain: Cytochrome f (310 aa).

Positions 1-27 (MRRLLSPLFAALIVGVTVLTAPSTSWA) are cleaved as a signal peptide. Positions 28, 48, 51, and 52 each coordinate heme. The chain crosses the membrane as a helical span at residues 277 to 297 (IYGLLAFFAAVALAQIMLVLK).

It belongs to the cytochrome f family. The 4 large subunits of the cytochrome b6-f complex are cytochrome b6, subunit IV (17 kDa polypeptide, PetD), cytochrome f and the Rieske protein, while the 4 small subunits are PetG, PetL, PetM and PetN. The complex functions as a dimer. The cofactor is heme.

It is found in the cellular thylakoid membrane. In terms of biological role, component of the cytochrome b6-f complex, which mediates electron transfer between photosystem II (PSII) and photosystem I (PSI), cyclic electron flow around PSI, and state transitions. The sequence is that of Cytochrome f from Synechococcus sp. (strain WH7803).